We begin with the raw amino-acid sequence, 182 residues long: Transcription termination/antitermination protein NusG (182 aa).

Residues Gly-131 to Ser-161 form the KOW domain.

The protein belongs to the NusG family.

In terms of biological role, participates in transcription elongation, termination and antitermination. The chain is Transcription termination/antitermination protein NusG from Vibrio cholerae serotype O1 (strain ATCC 39315 / El Tor Inaba N16961).